A 105-amino-acid chain; its full sequence is Pyrimidine/purine nucleoside phosphorylase (105 aa).

The protein belongs to the nucleoside phosphorylase PpnP family.

The enzyme catalyses a purine D-ribonucleoside + phosphate = a purine nucleobase + alpha-D-ribose 1-phosphate. The catalysed reaction is adenosine + phosphate = alpha-D-ribose 1-phosphate + adenine. It carries out the reaction cytidine + phosphate = cytosine + alpha-D-ribose 1-phosphate. It catalyses the reaction guanosine + phosphate = alpha-D-ribose 1-phosphate + guanine. The enzyme catalyses inosine + phosphate = alpha-D-ribose 1-phosphate + hypoxanthine. The catalysed reaction is thymidine + phosphate = 2-deoxy-alpha-D-ribose 1-phosphate + thymine. It carries out the reaction uridine + phosphate = alpha-D-ribose 1-phosphate + uracil. It catalyses the reaction xanthosine + phosphate = alpha-D-ribose 1-phosphate + xanthine. Its function is as follows. Catalyzes the phosphorolysis of diverse nucleosides, yielding D-ribose 1-phosphate and the respective free bases. Can use uridine, adenosine, guanosine, cytidine, thymidine, inosine and xanthosine as substrates. Also catalyzes the reverse reactions. This chain is Pyrimidine/purine nucleoside phosphorylase, found in Wolinella succinogenes (strain ATCC 29543 / DSM 1740 / CCUG 13145 / JCM 31913 / LMG 7466 / NCTC 11488 / FDC 602W) (Vibrio succinogenes).